The following is a 159-amino-acid chain: Transcriptional repressor NrdR (159 aa).

A zinc finger spans residues 3–34; sequence CPFCRHDDTQVVDSRVSEDGAAIRRRRRCSAC. An ATP-cone domain is found at 49-139; the sequence is PAVVKKDGSR…VYRRFEDVSE (91 aa).

This sequence belongs to the NrdR family. The cofactor is Zn(2+).

Negatively regulates transcription of bacterial ribonucleotide reductase nrd genes and operons by binding to NrdR-boxes. This Burkholderia pseudomallei (strain 1106a) protein is Transcriptional repressor NrdR.